The following is a 402-amino-acid chain: Protein RETARDED ROOT GROWTH-LIKE (402 aa).

A helical transmembrane segment spans residues 375-395; sequence SATLEWLIIILISMEIAISFY.

The protein belongs to the RMD1/sif2 family. Highly expressed in germinating seeds and developing seedlings. Also present at low levels in seedlings, roots, leaves, stems and flowers, and barely in siliques.

It is found in the mitochondrion membrane. The protein localises to the mitochondrion. Its function is as follows. Mediates abscisic acid (ABA) signal transduction through mitochondrial retrograde regulation involving ABI4 during seed germination and seedling growth, and leading to the production of reactive oxygen species (ROS) by the alternative respiratory pathway. Required for the maintenance of mitochondrial structure. This Arabidopsis thaliana (Mouse-ear cress) protein is Protein RETARDED ROOT GROWTH-LIKE.